Here is an 829-residue protein sequence, read N- to C-terminus: Isethionate sulfite-lyase (829 aa).

The PFL domain occupies 31–699 (ERVFNILDSF…VVSATPNGRL (669 aa)). 2-hydroxyethane-1-sulfonate-binding positions include Arg-188, Gln-192, 467–469 (CTE), and Arg-677. Cys-467 serves as the catalytic Cysteine radical intermediate. The active-site Proton acceptor is Glu-469. Residues 706-829 (DGSSASHGAD…LIARTQHDAM (124 aa)) form the Glycine radical domain. Gly-804 bears the Glycine radical mark.

It belongs to the glycyl radical enzyme (GRE) family. As to quaternary structure, homodimer. Post-translationally, requires the activating protein IslB to generate the key active site glycyl radical on Gly-804 that is involved in catalysis.

It catalyses the reaction 2-hydroxyethane-1-sulfonate = acetaldehyde + sulfite + H(+). The protein operates within organosulfur degradation; alkanesulfonate degradation. In terms of biological role, involved in an anaerobic respiration pathway that converts the sulfonate isethionate (2-hydroxyethanesulfonate) to ammonia, acetate and sulfide. Catalyzes the radical-mediated C-S bond cleavage of isethionate (2-hydroxyethanesulfonate) to form sulfite and acetaldehyde. The chain is Isethionate sulfite-lyase from Oleidesulfovibrio alaskensis (strain ATCC BAA-1058 / DSM 17464 / G20) (Desulfovibrio alaskensis).